We begin with the raw amino-acid sequence, 1200 residues long: Metabotropic glycine receptor (1200 aa).

An N-terminal signal peptide occupies residues 1-24 (MGAMAYSLLFCLLLAHLGLGEVGA). The interval 25-62 (SLDPPGRPDSPRERTPRGKQHGQQLPRASAPDPSIPWS) is disordered. The Extracellular segment spans residues 25–417 (SLDPPGRPDS…CFVQEDKYLR (393 aa)). A cache-like region region spans residues 85-281 (YLYTGDFHQL…CENGSYKPGW (197 aa)). Asparagine 98 and asparagine 143 each carry an N-linked (GlcNAc...) asparagine glycan. A disulfide bridge links cysteine 99 with cysteine 272. Glycine contacts are provided by serine 172 and arginine 173. N-linked (GlcNAc...) asparagine glycosylation occurs at asparagine 215. Positions 234–253 (LHRRGSNQGPRGLGHSWRRR) are disordered. Glycine is bound at residue glutamate 271. Asparagine 274 is a glycosylation site (N-linked (GlcNAc...) asparagine). Residue aspartate 307 coordinates glycine. A glycan (N-linked (GlcNAc...) asparagine) is linked at asparagine 333. The chain crosses the membrane as a helical span at residues 418–439 (LAIISFQALCMLLDFVSMLVVY). Topologically, residues 440-451 (HFRKAKSIRASG) are cytoplasmic. Residues 452–474 (LILLETILFGSLLLYFPVVILYF) traverse the membrane as a helical segment. The Extracellular segment spans residues 475–478 (EPST). A helical membrane pass occupies residues 479–501 (FRCILLRWARLLGFATVYGTVTL). Residues cysteine 481 and cysteine 573 are joined by a disulfide bond. The Cytoplasmic segment spans residues 502–525 (KLHRVLKVFLSRTAQRIPYMTGGR). The chain crosses the membrane as a helical span at residues 526–547 (VMRMLAVIVLVVFWFLVGWTSS). The Extracellular segment spans residues 548–576 (MCQNLERDILLVGQGQTSDHLTFNMCLID). A helical membrane pass occupies residues 577–597 (RWDYMTAVAEFLFLLWGIYLC). Residues 598–611 (YAVRTVPSAFHEPR) are Cytoplasmic-facing. The helical transmembrane segment at 612 to 633 (YMAVAVHNELIITAIFHTIRFV) threads the bilayer. Residues 634–642 (LASRLQPDW) are Extracellular-facing. The chain crosses the membrane as a helical span at residues 643–664 (MLMLYFAHAHLTVTVTIGLLLI). The Cytoplasmic segment spans residues 665–1200 (PKFSHSSNNP…SANKIPGPQK (536 aa)). Phosphoserine occurs at positions 694, 705, and 708. Positions 757–875 (RITEIPETVS…EAESTESVPL (119 aa)) are disordered. Composition is skewed to basic and acidic residues over residues 769–781 (CSKE…DHSA) and 819–828 (STYDHVRDQT). Lysine 774 is covalently cross-linked (Glycyl lysine isopeptide (Lys-Gly) (interchain with G-Cter in ubiquitin)). Low complexity predominate over residues 845–856 (ENSTLESLSSKK). Phosphoserine occurs at positions 865 and 944. Residues 947–988 (DNVETIPNSGHMEEPRKPQKSGIMKQQRVSLPTANPDVSSGI) are disordered. Residues 973-988 (QRVSLPTANPDVSSGI) are compositionally biased toward polar residues. Residues 1000 to 1004 (VCPWE) carry the VCPWE motif 1 motif. The residue at position 1059 (serine 1059) is a Phosphoserine. The VCPWE motif 2 signature appears at 1065–1069 (VCPWE). Serine 1074 is subject to Phosphoserine. Residues 1130-1160 (QMGDQEKQTSSSVDIIPGSCNSSNNSHQPLT) form a disordered region. A VCPWE motif 3 motif is present at residues 1165-1169 (VCPWE). The interval 1177-1200 (NAERSVTLPASSALSANKIPGPQK) is disordered. The span at 1178-1191 (AERSVTLPASSALS) shows a compositional bias: polar residues.

The protein belongs to the G-protein coupled receptor 3 family. As to quaternary structure, homodimer. Associates with the RGS7-GNB5 complex, promoting its localization to the cell membrane and regulating its GTPase activator activity. Interacts (via VCPWE motifs) with GNAO1. Interacts with GPC4. Interacts with EGFLAM. As to expression, highly expressed in brain. Expressed in several brain regions including the cerebral cortex, hippocampus, cerebellum and caudate putamen. Only expressed in neurons, and not in microglia, oligodendrocytes or astrocytes. Expressed in the visual center of the cerebral cortex. Also expressed in the eye, including photoreceptors, ganglion cells and trabecular meshwork.

The protein resides in the cell membrane. It is found in the postsynaptic cell membrane. The protein localises to the presynaptic cell membrane. It localises to the nucleus. Metabotropic receptor for glycine that controls synapse formation and function in the brain. Acts as an atypical G-protein coupled receptor that recruits and regulates the RGS7-GNB5 complex instead of activating G proteins. In absence of glycine ligand, promotes the GTPase activator activity of RGS7, increasing the GTPase activity of G protein alpha subunits, thereby driving them into their inactive GDP-bound form. Glycine-binding changes the conformation of the intracellular surface, inhibiting the GTPase activator activity of the RGS7-GNB5 complex, promoting G protein alpha subunits into their active GTP-bound form and regulating cAMP levels. Also able to bind taurine, a compound closely related to glycine, but with a two-fold lower affinity. Glycine receptor-dependent regulation of cAMP controls key ion channels, kinases and neurotrophic factors involved in neuronal excitability and synaptic transmission. Plays a pivotal role in regulating mood and cognition via its ability to regulate neuronal excitability in L2/L3 pyramidal neurons of the prefrontal cortex. Also involved in spatial learning by regulating hippocampal CA1 neuronal excitability. Acts as a synaptic organizer in the hippocampus, required for proper mossy fiber-CA3 neurocircuitry establishment, structure and function: induces presynaptic differentiation in contacting axons via its interaction with GPC4. In addition to glycine, may also act as a receptor for osteocalcin (Bglap or Bglap2) hormone: osteocalcin-binding initiates a signaling response that prevents neuronal apoptosis in the hippocampus and regulates the synthesis of neurotransmitters. This Mus musculus (Mouse) protein is Metabotropic glycine receptor.